Consider the following 522-residue polypeptide: Exo-alpha-(1-&gt;6)-L-arabinofuranosidase (522 aa).

3 residues coordinate alpha-L-arabinofuranose: E39, N84, and N185. Catalysis depends on E186, which acts as the Proton donor/acceptor. Y257, E310, and Q370 together coordinate alpha-L-arabinofuranose. The active-site Nucleophile is the E310.

It belongs to the glycosyl hydrolase 51 family. As to quaternary structure, homohexamer; trimer of dimers.

The catalysed reaction is Hydrolysis of terminal non-reducing alpha-L-arabinofuranoside residues in alpha-L-arabinosides.. The enzyme catalyses (20S)-ginsenoside Rc + H2O = L-arabinofuranose + (20S)-ginsenoside Rd. Completely inhibited by Cu(2+) and partially inhibited by Co(2+) and Ba(2+). Functionally, catalyzes the hydrolysis of p-nitrophenyl-alpha-L-arabinofuranoside (pNP-alphaL-Af) and the hydrolysis of the terminal alpha-L-arabinofuranoside at the C20 position of ginsenoside Rc to produce ginsenoside Rd. Cannot hydrolyze p-nitrophenyl-alpha-L-arabinopyranoside (pNP-alphaL-Ap) and ginsenoside Rb2. The sequence is that of Exo-alpha-(1-&gt;6)-L-arabinofuranosidase from Bifidobacterium longum.